We begin with the raw amino-acid sequence, 483 residues long: Threonine synthase-like 2 (483 aa).

Lysine 113 is subject to N6-(pyridoxal phosphate)lysine.

This sequence belongs to the threonine synthase family. The cofactor is pyridoxal 5'-phosphate.

Acts as a catabolic phospho-lyase on both gamma- and beta-phosphorylated substrates. Degrades O-phospho-threonine (PThr) to alpha-ketobutyrate, ammonia and phosphate. Also degrades O-phospho-homoserine (PHS), but this is not its physiological substrate. The sequence is that of Threonine synthase-like 2 (Thnsl2) from Mus musculus (Mouse).